Here is a 220-residue protein sequence, read N- to C-terminus: Translation initiation factor 6 (220 aa).

Belongs to the eIF-6 family.

Functionally, binds to the 50S ribosomal subunit and prevents its association with the 30S ribosomal subunit to form the 70S initiation complex. The chain is Translation initiation factor 6 from Halobacterium salinarum (strain ATCC 29341 / DSM 671 / R1).